Here is a 248-residue protein sequence, read N- to C-terminus: Phosphoribosylformylglycinamidine synthase subunit PurQ (248 aa).

In terms of domain architecture, Glutamine amidotransferase type-1 spans A6–T248. The active-site Nucleophile is the C95. Residues H215 and E217 contribute to the active site.

Part of the FGAM synthase complex composed of 1 PurL, 1 PurQ and 2 PurS subunits.

The protein resides in the cytoplasm. The enzyme catalyses N(2)-formyl-N(1)-(5-phospho-beta-D-ribosyl)glycinamide + L-glutamine + ATP + H2O = 2-formamido-N(1)-(5-O-phospho-beta-D-ribosyl)acetamidine + L-glutamate + ADP + phosphate + H(+). It carries out the reaction L-glutamine + H2O = L-glutamate + NH4(+). It participates in purine metabolism; IMP biosynthesis via de novo pathway; 5-amino-1-(5-phospho-D-ribosyl)imidazole from N(2)-formyl-N(1)-(5-phospho-D-ribosyl)glycinamide: step 1/2. Its function is as follows. Part of the phosphoribosylformylglycinamidine synthase complex involved in the purines biosynthetic pathway. Catalyzes the ATP-dependent conversion of formylglycinamide ribonucleotide (FGAR) and glutamine to yield formylglycinamidine ribonucleotide (FGAM) and glutamate. The FGAM synthase complex is composed of three subunits. PurQ produces an ammonia molecule by converting glutamine to glutamate. PurL transfers the ammonia molecule to FGAR to form FGAM in an ATP-dependent manner. PurS interacts with PurQ and PurL and is thought to assist in the transfer of the ammonia molecule from PurQ to PurL. The chain is Phosphoribosylformylglycinamidine synthase subunit PurQ from Picrophilus torridus (strain ATCC 700027 / DSM 9790 / JCM 10055 / NBRC 100828 / KAW 2/3).